We begin with the raw amino-acid sequence, 251 residues long: 5'-nucleotidase SurE (251 aa).

A divalent metal cation contacts are provided by aspartate 8, aspartate 9, serine 39, and asparagine 95.

It belongs to the SurE nucleotidase family. It depends on a divalent metal cation as a cofactor.

Its subcellular location is the cytoplasm. It carries out the reaction a ribonucleoside 5'-phosphate + H2O = a ribonucleoside + phosphate. Functionally, nucleotidase that shows phosphatase activity on nucleoside 5'-monophosphates. This is 5'-nucleotidase SurE from Ralstonia pickettii (strain 12J).